A 544-amino-acid polypeptide reads, in one-letter code: Inosine-5'-monophosphate dehydrogenase (544 aa).

CBS domains follow at residues 132–192 and 194–250; these read FITD…PIKS and MTTE…PYAS. Residues 288 to 290 and 338 to 340 contribute to the NAD(+) site; these read DSS and GMG. K(+) contacts are provided by G340 and G342. Residue S343 coordinates IMP. C345 is a binding site for K(+). C345 serves as the catalytic Thioimidate intermediate. IMP is bound by residues 378–380, 401–402, and 425–429; these read DGG, GG, and YRGMG. The active-site Proton acceptor is the R458. Q470 is a binding site for IMP. E529, G530, and G531 together coordinate K(+).

It belongs to the IMPDH/GMPR family. As to quaternary structure, homotetramer. It depends on K(+) as a cofactor.

It localises to the cytoplasm. The catalysed reaction is IMP + NAD(+) + H2O = XMP + NADH + H(+). Its pathway is purine metabolism; XMP biosynthesis via de novo pathway; XMP from IMP: step 1/1. Its activity is regulated as follows. Mycophenolic acid (MPA) is a non-competitive inhibitor that prevents formation of the closed enzyme conformation by binding to the same site as the amobile flap. In contrast, mizoribine monophosphate (MZP) is a competitive inhibitor that induces the closed conformation. MPA is a potent inhibitor of mammalian IMPDHs but a poor inhibitor of the bacterial enzymes. MZP is a more potent inhibitor of bacterial IMPDH. Catalyzes the conversion of inosine 5'-phosphate (IMP) to xanthosine 5'-phosphate (XMP), the first committed and rate-limiting step in the de novo synthesis of guanine nucleotides, and therefore plays an important role in the regulation of cell growth. The sequence is that of Inosine-5'-monophosphate dehydrogenase from Cryptococcus neoformans var. neoformans serotype D (strain JEC21 / ATCC MYA-565) (Filobasidiella neoformans).